Reading from the N-terminus, the 210-residue chain is ATP-dependent Clp protease proteolytic subunit (210 aa).

S107 (nucleophile) is an active-site residue. The active site involves H132.

Belongs to the peptidase S14 family. In terms of assembly, fourteen ClpP subunits assemble into 2 heptameric rings which stack back to back to give a disk-like structure with a central cavity, resembling the structure of eukaryotic proteasomes.

Its subcellular location is the cytoplasm. It carries out the reaction Hydrolysis of proteins to small peptides in the presence of ATP and magnesium. alpha-casein is the usual test substrate. In the absence of ATP, only oligopeptides shorter than five residues are hydrolyzed (such as succinyl-Leu-Tyr-|-NHMec, and Leu-Tyr-Leu-|-Tyr-Trp, in which cleavage of the -Tyr-|-Leu- and -Tyr-|-Trp bonds also occurs).. Its function is as follows. Cleaves peptides in various proteins in a process that requires ATP hydrolysis. Has a chymotrypsin-like activity. Plays a major role in the degradation of misfolded proteins. The sequence is that of ATP-dependent Clp protease proteolytic subunit from Chromobacterium violaceum (strain ATCC 12472 / DSM 30191 / JCM 1249 / CCUG 213 / NBRC 12614 / NCIMB 9131 / NCTC 9757 / MK).